A 999-amino-acid chain; its full sequence is Translation initiation factor IF-2 (999 aa).

Residues 50–407 (AFVNNTGSPA…RGQGQTVRLS (358 aa)) are disordered. 2 stretches are compositionally biased toward pro residues: residues 60–89 (PAAP…PPGG) and 96–121 (PMPP…PPQS). Positions 136–162 (VAAAEARAAALKAEQEAAVKAAQAARQ) are enriched in low complexity. A compositionally biased stretch (basic and acidic residues) spans 163 to 173 (QQRDNVRREPP). The span at 179–194 (RPGPRPGPGAMPPRPG) shows a compositional bias: pro residues. The span at 213 to 222 (GGRPPARGAG) shows a compositional bias: low complexity. Residues 244–266 (RPSPASMPPRPSPASMPPRPSPA) show a composition bias toward pro residues. Positions 275–367 (RPGGPGSGRP…GAAGAFGRPG (93 aa)) are enriched in gly residues. The segment covering 371 to 380 (TRGRKSKKQR) has biased composition (basic residues). Polar residues predominate over residues 388-405 (SAPTMSSGAPRGQGQTVR). Residues 490-662 (SRPPVVTVMG…VLLTADASLE (173 aa)) enclose the tr-type G domain. Residues 499 to 506 (GHVDHGKT) are G1. 499-506 (GHVDHGKT) provides a ligand contact to GTP. The segment at 524 to 528 (GITQH) is G2. Residues 549–552 (DTPG) are G3. GTP contacts are provided by residues 549 to 553 (DTPGH) and 603 to 606 (NKID). Positions 603-606 (NKID) are G4. Positions 639–641 (AAK) are G5.

Belongs to the TRAFAC class translation factor GTPase superfamily. Classic translation factor GTPase family. IF-2 subfamily.

The protein localises to the cytoplasm. Its function is as follows. One of the essential components for the initiation of protein synthesis. Protects formylmethionyl-tRNA from spontaneous hydrolysis and promotes its binding to the 30S ribosomal subunits. Also involved in the hydrolysis of GTP during the formation of the 70S ribosomal complex. This Salinispora tropica (strain ATCC BAA-916 / DSM 44818 / JCM 13857 / NBRC 105044 / CNB-440) protein is Translation initiation factor IF-2.